A 93-amino-acid polypeptide reads, in one-letter code: Small ribosomal subunit protein uS15 (93 aa).

It belongs to the universal ribosomal protein uS15 family. Part of the 30S ribosomal subunit. Forms a bridge to the 50S subunit in the 70S ribosome, contacting the 23S rRNA.

In terms of biological role, one of the primary rRNA binding proteins, it binds directly to 16S rRNA where it helps nucleate assembly of the platform of the 30S subunit by binding and bridging several RNA helices of the 16S rRNA. Functionally, forms an intersubunit bridge (bridge B4) with the 23S rRNA of the 50S subunit in the ribosome. In Ehrlichia ruminantium (strain Gardel), this protein is Small ribosomal subunit protein uS15.